We begin with the raw amino-acid sequence, 89 residues long: RNA-binding protein Hfq (89 aa).

Residues 14 to 73 (DPYLNALRKEKINVAIYLVNGVKLQGRVDSFDQFVVLLRSNVTQMVYKHAISTIVPARDP) form the Sm domain.

It belongs to the Hfq family. In terms of assembly, homohexamer.

RNA chaperone that binds small regulatory RNA (sRNAs) and mRNAs to facilitate mRNA translational regulation in response to envelope stress, environmental stress and changes in metabolite concentrations. Also binds with high specificity to tRNAs. The chain is RNA-binding protein Hfq from Hydrogenovibrio crunogenus (strain DSM 25203 / XCL-2) (Thiomicrospira crunogena).